The primary structure comprises 280 residues: Undecaprenyl-diphosphatase (280 aa).

Transmembrane regions (helical) follow at residues 2–22 (FIIEIFISIIYGIIEGITEWL), 45–65 (AFMEMFNVVIQLGAILAVVVI), 86–106 (WQLWAKVVVAALPAAVIGLFL), 114–134 (FYNLVSVSVMLIVYGAAFIYL), 147–167 (LASLPYKTALQIGLFQILALF), 188–208 (SVVTEFTFYLGIPIMFGASGW), 223–243 (GQIFLLLVAMGVAFGVSLVVI), and 255–275 (FTIFGKYRIGLGGVLLVYAAI).

The protein belongs to the UppP family.

Its subcellular location is the cell membrane. The enzyme catalyses di-trans,octa-cis-undecaprenyl diphosphate + H2O = di-trans,octa-cis-undecaprenyl phosphate + phosphate + H(+). Its function is as follows. Catalyzes the dephosphorylation of undecaprenyl diphosphate (UPP). Confers resistance to bacitracin. The sequence is that of Undecaprenyl-diphosphatase from Streptococcus sanguinis (strain SK36).